The primary structure comprises 468 residues: BTB/POZ domain-containing protein 17 (468 aa).

The signal sequence occupies residues 1–16 (MRRFCVVPLLLVLVEA). The BTB domain occupies 51-120 (TDTILRIRTA…FYCGEISVNL (70 aa)). Positions 159–259 (VVSWYHYALR…ISPSQLFQIQ (101 aa)) constitute a BACK domain.

Its subcellular location is the secreted. The polypeptide is BTB/POZ domain-containing protein 17 (btbd17) (Xenopus tropicalis (Western clawed frog)).